We begin with the raw amino-acid sequence, 468 residues long: Elongation factor 1-alpha (468 aa).

In terms of domain architecture, tr-type G spans Lys-6–Ser-244. Residues Gly-15–Ser-22 form a G1 region. GTP is bound at residue Gly-15–Ser-22. The G2 stretch occupies residues Gly-71–Asp-75. A G3 region spans residues Asp-92 to Gly-95. Residues Asp-92 to His-96 and Asn-154 to Asp-157 contribute to the GTP site. A G4 region spans residues Asn-154 to Asp-157. Residues Ser-195–Trp-197 are G5. 5-glutamyl glycerylphosphorylethanolamine is present on residues Glu-303 and Glu-376.

This sequence belongs to the TRAFAC class translation factor GTPase superfamily. Classic translation factor GTPase family. EF-Tu/EF-1A subfamily.

Its subcellular location is the cytoplasm. This protein promotes the GTP-dependent binding of aminoacyl-tRNA to the A-site of ribosomes during protein biosynthesis. This is Elongation factor 1-alpha from Hydra vulgaris (Hydra).